The chain runs to 324 residues: Bile salt hydrolase/transferase (324 aa).

C2 serves as the catalytic Nucleophile; acyl-thioester intermediate. C2 and R16 together coordinate deoxycholate. N79 contributes to the taurine binding site.

It belongs to the peptidase C59 family. Homotetramer. The tetramer consists of a dimer of dimers.

The catalysed reaction is glycocholate + H2O = cholate + glycine. It carries out the reaction glycodeoxycholate + H2O = deoxycholate + glycine. It catalyses the reaction chenodeoxycholate + glycine = glycochenodeoxycholate + H2O. The enzyme catalyses cholate + taurine = taurocholate + H2O. The catalysed reaction is taurodeoxycholate + H2O = deoxycholate + taurine. It carries out the reaction taurochenodeoxycholate + H2O = chenodeoxycholate + taurine. It catalyses the reaction an L-alpha-amino acid + cholate = an N-choloyl-L-alpha-amino acid + H2O. The enzyme catalyses an L-alpha-amino acid + taurocholate = an N-choloyl-L-alpha-amino acid + taurine. The catalysed reaction is glycocholate + an L-alpha-amino acid = an N-choloyl-L-alpha-amino acid + glycine. The protein operates within lipid metabolism; bile acid biosynthesis. Its function is as follows. Possesses dual functions in bile acid metabolism. Acts as a bile salt hydrolase that catalyzes the deconjugation of glycine- and taurine-linked bile salts, which occurs naturally in the intestines of animals, releasing amino acid residues and deconjugated bile salts (bile acids). Can hydrolyze the amide bond in the bile salts glycocholate (GCA), glycodeoxycholate (GDCA), glycochenodeoxycholate (GCDCA), taurocholate (TCA), taurodeoxycholate (TDCA) and taurochenodeoxycholate (TCDCA). Shows a preference for glycine-conjugated bile acids as substrates. Also acts as an amine N-acyltransferase that conjugates a wide variety of amino acids to conjugated and non-conjugated bile acids, thus producing bacterial bile acid amidates (BBAAs) - also named microbially conjugated bile acids (MCBAs) - in the gastrointestinal tract. These BBAAs may facilitate communication between the microbiota and host through the activation of host ligand-activated transcription factors. This Lactiplantibacillus plantarum (strain ATCC BAA-793 / NCIMB 8826 / WCFS1) (Lactobacillus plantarum) protein is Bile salt hydrolase/transferase.